The chain runs to 485 residues: MKVLFAVSECAPFAKSGGLADVAGALPKELRRLGIDARVMLPKYETIAPEWKKKMKKVAELIVPVGWRRQYCGVEELRHDGVIYYFIDNEYYFKRPQLYGHYDDGERFAYFCRAVLEVLPEIQFQPDVIHCHDWHTGMVPFLLREQYRHELFYVDMRTVFTIHNLQFQGLFPRGILEDLLNLDGRYFTVDHLEFYGCVSFMKGALVASDLITTVSPTYKEEIQTAYYGERLDGLLRARRDDLLGILNGIDDEFYNPEADPFLTATYSVHTRERKQLNKRALQRQFGLPEWDDVPLIAMVTRMTAQKGLDLVTCVFHEMMSEDMQLVVLGTGDWRFEQFFSQMAAAYPGKVGVYIGFHEPLAHQIYAGADLFLMPSLFEPCGLSQMIALRYGTIPIVRETGGLNDTVQSYNEITKEGNGFSFTNFNAHDMLYTIRRALSFYRQPSVWEQLTERAMRGDYSWRRSANQYKQAYEQLIKKEEHTLVHG.

Lys15 is an ADP-alpha-D-glucose binding site.

Belongs to the glycosyltransferase 1 family. Bacterial/plant glycogen synthase subfamily.

It catalyses the reaction [(1-&gt;4)-alpha-D-glucosyl](n) + ADP-alpha-D-glucose = [(1-&gt;4)-alpha-D-glucosyl](n+1) + ADP + H(+). Its pathway is glycan biosynthesis; glycogen biosynthesis. Its function is as follows. Synthesizes alpha-1,4-glucan chains using ADP-glucose. This chain is Glycogen synthase, found in Geobacillus thermodenitrificans (strain NG80-2).